A 288-amino-acid polypeptide reads, in one-letter code: Large ribosomal subunit protein uL2 (288 aa).

Positions 29-43 (PEKSLTRGFKRDKGR) are enriched in basic and acidic residues. Disordered stretches follow at residues 29–59 (PEKS…GGHK) and 210–288 (GRNR…GRQS). Composition is skewed to basic residues over residues 210–221 (GRNRWKGRRPKV) and 272–288 (VRRR…GRQS).

Belongs to the universal ribosomal protein uL2 family. In terms of assembly, part of the 50S ribosomal subunit. Forms a bridge to the 30S subunit in the 70S ribosome.

Functionally, one of the primary rRNA binding proteins. Required for association of the 30S and 50S subunits to form the 70S ribosome, for tRNA binding and peptide bond formation. It has been suggested to have peptidyltransferase activity; this is somewhat controversial. Makes several contacts with the 16S rRNA in the 70S ribosome. The chain is Large ribosomal subunit protein uL2 from Thermosynechococcus vestitus (strain NIES-2133 / IAM M-273 / BP-1).